The following is a 427-amino-acid chain: Glutamate-1-semialdehyde 2,1-aminomutase (427 aa).

K265 is modified (N6-(pyridoxal phosphate)lysine).

This sequence belongs to the class-III pyridoxal-phosphate-dependent aminotransferase family. HemL subfamily. Homodimer. Pyridoxal 5'-phosphate is required as a cofactor.

The protein resides in the cytoplasm. The catalysed reaction is (S)-4-amino-5-oxopentanoate = 5-aminolevulinate. It participates in porphyrin-containing compound metabolism; protoporphyrin-IX biosynthesis; 5-aminolevulinate from L-glutamyl-tRNA(Glu): step 2/2. The sequence is that of Glutamate-1-semialdehyde 2,1-aminomutase from Pseudomonas syringae pv. tomato (strain ATCC BAA-871 / DC3000).